The chain runs to 159 residues: 6,7-dimethyl-8-ribityllumazine synthase (159 aa).

Residues Phe-22, 57 to 59 (TYE), and 81 to 83 (TII) each bind 5-amino-6-(D-ribitylamino)uracil. Position 86–87 (86–87 (ST)) interacts with (2S)-2-hydroxy-3-oxobutyl phosphate. The Proton donor role is filled by His-89. Met-114 is a 5-amino-6-(D-ribitylamino)uracil binding site. Arg-128 contacts (2S)-2-hydroxy-3-oxobutyl phosphate.

This sequence belongs to the DMRL synthase family. In terms of assembly, forms an icosahedral capsid composed of 60 subunits, arranged as a dodecamer of pentamers.

It carries out the reaction (2S)-2-hydroxy-3-oxobutyl phosphate + 5-amino-6-(D-ribitylamino)uracil = 6,7-dimethyl-8-(1-D-ribityl)lumazine + phosphate + 2 H2O + H(+). It participates in cofactor biosynthesis; riboflavin biosynthesis; riboflavin from 2-hydroxy-3-oxobutyl phosphate and 5-amino-6-(D-ribitylamino)uracil: step 1/2. In terms of biological role, catalyzes the formation of 6,7-dimethyl-8-ribityllumazine by condensation of 5-amino-6-(D-ribitylamino)uracil with 3,4-dihydroxy-2-butanone 4-phosphate. This is the penultimate step in the biosynthesis of riboflavin. In Buchnera aphidicola subsp. Schizaphis graminum (strain Sg), this protein is 6,7-dimethyl-8-ribityllumazine synthase.